The following is a 955-amino-acid chain: Kinesin heavy chain isoform 5C (955 aa).

A Kinesin motor domain is found at Ser8–Ile327. 8 residues coordinate ATP: Gln87, Ser89, Ser90, Gly91, Lys92, Thr93, His94, and Lys99. Residues Val174–Lys315 form a microtubule-binding region. Residues Ser332–Glu366 are a coiled coil. Residue Thr403 is modified to Phosphothreonine. Coiled-coil stretches lie at residues Lys413–Leu538 and Ile590–Ala913. The globular stretch occupies residues Cys859–Lys955. Residues Ala909–Lys955 form a disordered region.

This sequence belongs to the TRAFAC class myosin-kinesin ATPase superfamily. Kinesin family. Kinesin subfamily. In terms of assembly, oligomer composed of two heavy chains and two light chains. Interacts with GRIP1. Interacts with TRAK1. Interacts with ZFYVE27. Interacts with KLC3.

Its subcellular location is the cytoplasm. It is found in the cytoskeleton. The protein localises to the cell projection. It localises to the dendrite. The catalysed reaction is ATP + H2O = ADP + phosphate + H(+). Microtubule-associated force-producing protein that may play a role in organelle transport. Has ATPase activity. Involved in synaptic transmission. Mediates dendritic trafficking of mRNAs. Required for anterograde axonal transportation of MAPK8IP3/JIP3 which is essential for MAPK8IP3/JIP3 function in axon elongation. The sequence is that of Kinesin heavy chain isoform 5C (Kif5c) from Rattus norvegicus (Rat).